A 618-amino-acid chain; its full sequence is 1-deoxy-D-xylulose-5-phosphate synthase (618 aa).

Thiamine diphosphate is bound by residues His-75 and Gly-116–Ser-118. Asp-147 lines the Mg(2+) pocket. Thiamine diphosphate-binding positions include Gly-148–Ala-149, Asn-176, Tyr-283, and Glu-364. Asn-176 serves as a coordination point for Mg(2+).

This sequence belongs to the transketolase family. DXPS subfamily. Homodimer. Mg(2+) is required as a cofactor. The cofactor is thiamine diphosphate.

It catalyses the reaction D-glyceraldehyde 3-phosphate + pyruvate + H(+) = 1-deoxy-D-xylulose 5-phosphate + CO2. The protein operates within metabolic intermediate biosynthesis; 1-deoxy-D-xylulose 5-phosphate biosynthesis; 1-deoxy-D-xylulose 5-phosphate from D-glyceraldehyde 3-phosphate and pyruvate: step 1/1. Catalyzes the acyloin condensation reaction between C atoms 2 and 3 of pyruvate and glyceraldehyde 3-phosphate to yield 1-deoxy-D-xylulose-5-phosphate (DXP). In Thiobacillus denitrificans (strain ATCC 25259 / T1), this protein is 1-deoxy-D-xylulose-5-phosphate synthase.